Here is a 663-residue protein sequence, read N- to C-terminus: MISVQSTETIQKVLENEGDQQFDKEVVQNSDSNIETGQISDSLTKAVEERAETESSSNLSNFTTSESESSKPAYCFNSHSQNMAEGSISIPVISHSMNVENEVSTAEGQDSRTGESENDQNAMIVRSIWDIEKASLLVNDCQNIANMAEQKVMMVSAIFSESSKDIVNPESFSERLGKETVKDLYEFNEQLTTKYGLEFRTIFFSYIRKYDAYWCLFEDLEKPLKSIQFFTGLIDLLDNTNKHLTLRSIVLDALLSADEEDSFYGDALVLFEELVIRYFGTDSNPSIDASEFILSCLPYTSLDALNVVCGQVWKSQKICDFLKSTIGNTSNSPLQLRASFPAFVNAVIHFLLEFKNVRRLERKDLSVKGMLYDSDSQQILNRLRERVSGSTAQSADEASGHESDASEDTFSERTLGLNSIDNTEISEVVSLGLVSSALDKITGLLSADNLSETVSQARDFSHTLSKSLKSRAKSLSQKEAANRSKLIAKRGDNLRREASLSSEQDDLSEDFPPVRESDEQESRSGGRSSAMRVSIERSAARSGTRRSQGNPYEGYRTRRKWTDEEENELYEMISQHGCCWSKIIHIQKLENGPLKTFGPTQIKDKARLIKARFMKQNRLQELYSKSLNWKNVTVGQAYCELHKIPYIEATPPLLREELVNYQS.

The disordered stretch occupies residues 15 to 72; it reads ENEGDQQFDKEVVQNSDSNIETGQISDSLTKAVEERAETESSSNLSNFTTSESESSKP. Polar residues-rich tracts occupy residues 27–43 and 54–67; these read VQNS…SDSL and ESSS…TSES. The residue at position 332 (S332) is a Phosphoserine. Disordered stretches follow at residues 389–412 and 471–554; these read GSTA…TFSE and RAKS…PYEG. 2 stretches are compositionally biased toward basic and acidic residues: residues 489–498 and 512–524; these read KRGDNLRREA and PPVR…ESRS. The Myb-like domain occupies 556 to 612; that stretch reads RTRRKWTDEEENELYEMISQHGCCWSKIIHIQKLENGPLKTFGPTQIKDKARLIKAR.

As to quaternary structure, interacts with taf1 via the Myb domain, and ccq1.

The protein localises to the cytoplasm. It localises to the nucleus. The protein resides in the chromosome. It is found in the telomere. Functionally, regulates telomere length and function. Required for the repression of telomere-adjacent gene expression and for normal meiosis or sporulation. It may be a negative regulator of the telomere-replicating enzyme, telomerase, or may protect against activation of telomerase-independent pathways of telomere elongation. It may be involved in the interactions between chromosomes and spindle proteins, disruption of these interactions would lead to defective meiosis. This chain is Telomere length regulator taz1 (taz1), found in Schizosaccharomyces pombe (strain 972 / ATCC 24843) (Fission yeast).